We begin with the raw amino-acid sequence, 248 residues long: DNA polymerase sliding clamp 2 (248 aa).

The protein belongs to the PCNA family. Homotrimer. The subunits circularize to form a toroid; DNA passes through its center. Replication factor C (RFC) is required to load the toroid on the DNA.

Its function is as follows. Sliding clamp subunit that acts as a moving platform for DNA processing. Responsible for tethering the catalytic subunit of DNA polymerase and other proteins to DNA during high-speed replication. In Sulfurisphaera ohwakuensis, this protein is DNA polymerase sliding clamp 2.